A 428-amino-acid chain; its full sequence is Flotillin-2 (428 aa).

Gly-2 is lipidated: N-myristoyl glycine. Cys-4 carries S-palmitoyl cysteine; by ZDHHC5 lipidation. Cys-19 carries the S-palmitoyl cysteine lipid modification. Cys-20 carries the S-palmitoyl cysteine; by ZDHHC5 lipid modification. At Ser-405 the chain carries Phosphoserine.

Belongs to the band 7/mec-2 family. Flotillin subfamily. In terms of assembly, heterooligomeric complex of flotillin-1 and flotillin-2 and caveolin-1 and caveolin-2. Interacts with ECPAS. ZDHHC5-catalyzed palmitoylation may be required for the formation of higher-order complexes and for neurite outgrowth in cultured neural stem cells.

The protein resides in the cell membrane. The protein localises to the membrane. Its subcellular location is the caveola. It is found in the endosome. Functionally, may act as a scaffolding protein within caveolar membranes, functionally participating in formation of caveolae or caveolae-like vesicles. May be involved in epidermal cell adhesion and epidermal structure and function. This Bos taurus (Bovine) protein is Flotillin-2 (FLOT2).